A 541-amino-acid polypeptide reads, in one-letter code: Chaperonin GroEL 1 (541 aa).

Residues threonine 29 to proline 32, aspartate 86 to threonine 90, glycine 413, asparagine 477 to alanine 479, and aspartate 493 each bind ATP.

This sequence belongs to the chaperonin (HSP60) family. Forms a cylinder of 14 subunits composed of two heptameric rings stacked back-to-back. Interacts with the co-chaperonin GroES.

It is found in the cytoplasm. It catalyses the reaction ATP + H2O + a folded polypeptide = ADP + phosphate + an unfolded polypeptide.. Functionally, together with its co-chaperonin GroES, plays an essential role in assisting protein folding. The GroEL-GroES system forms a nano-cage that allows encapsulation of the non-native substrate proteins and provides a physical environment optimized to promote and accelerate protein folding. The chain is Chaperonin GroEL 1 from Paenarthrobacter aurescens (strain TC1).